The following is a 450-amino-acid chain: Putative zinc metalloprotease PA3649 (450 aa).

Histidine 21 serves as a coordination point for Zn(2+). Glutamate 22 is an active-site residue. Histidine 25 lines the Zn(2+) pocket. The chain crosses the membrane as a helical span at residues isoleucine 97–alanine 119. Positions glycine 199–valine 291 constitute a PDZ domain. Residues alanine 425–valine 444 form a helical membrane-spanning segment.

The protein belongs to the peptidase M50B family. Zn(2+) is required as a cofactor.

It localises to the cell inner membrane. This Pseudomonas aeruginosa (strain ATCC 15692 / DSM 22644 / CIP 104116 / JCM 14847 / LMG 12228 / 1C / PRS 101 / PAO1) protein is Putative zinc metalloprotease PA3649.